Consider the following 403-residue polypeptide: MTSYSYRQTSAMSSFGGTGGGSVRIGSGGVFRAPSIHGGSGGRGVSVSSTRFVTSSSGSYGGVRGGSFSGTLAVSDGLLSGNEKITMQNLNDRLASYLDKVRALEQANGELEVKIRDWYQKQGPGPSRDYNHYFKTIEDLRDKILGATIDNSKIVLQIDNARLAADDFRTKFETEHALRLSVEADINGLRRVLDELTLARTDLEMQIESLKEELAYLKKNHEEEITALRSQVGGQVSVEVDSTPGVDLAKILSEMRSQYEIMAEKNRKDAEATYLARIEELNTQVAVHSEQIQISKTEVTDLRRTLQGLEIELQSQLSMKAALEGTLAETEARYGVQLSQIQSVISGFEAQLSDVRADIERQNQEYKQLMDIKSRLEQEIATYRSLLEGQEAHYNNLPTPKAI.

A head region spans residues 1–82; that stretch reads MTSYSYRQTS…AVSDGLLSGN (82 aa). An Omega-N-methylarginine modification is found at Arg-7. Phosphoserine is present on residues Ser-14 and Ser-22. Position 24 is an asymmetric dimethylarginine; alternate (Arg-24). Arg-24 is subject to Omega-N-methylarginine; alternate. The residue at position 27 (Ser-27) is a Phosphoserine. An Omega-N-methylarginine modification is found at Arg-32. Residues Ser-35 and Ser-40 each carry the phosphoserine modification. Residues Arg-43 and Arg-51 each carry the omega-N-methylarginine modification. Position 57 is a phosphoserine (Ser-57). Arg-64 is modified (omega-N-methylarginine). Phosphoserine occurs at positions 67 and 75. Residues 83–118 are coil 1A; it reads EKITMQNLNDRLASYLDKVRALEQANGELEVKIRDW. One can recognise an IF rod domain in the interval 83–394; it reads EKITMQNLND…SLLEGQEAHY (312 aa). The linker 1 stretch occupies residues 119–136; it reads YQKQGPGPSRDYNHYFKT. The interval 137-228 is coil 1B; the sequence is IEDLRDKILG…KNHEEEITAL (92 aa). The segment at 229-251 is linker 12; the sequence is RSQVGGQVSVEVDSTPGVDLAKI. The interval 247-393 is necessary for interaction with PNN; that stretch reads DLAKILSEMR…RSLLEGQEAH (147 aa). The coil 2 stretch occupies residues 252–390; sequence LSEMRSQYEI…ATYRSLLEGQ (139 aa). A Phosphothreonine modification is found at Thr-326. Residues 391–403 are rod-like helical tail; the sequence is EAHYNNLPTPKAI. Position 394 is a phosphotyrosine (Tyr-394).

Belongs to the intermediate filament family. Heterotetramer of two type I and two type II keratins. Interacts with PNN and the actin-binding domain of DMD.

In terms of biological role, involved in the organization of myofibers. Together with KRT8, helps to link the contractile apparatus to dystrophin at the costameres of striated muscle. The chain is Keratin, type I cytoskeletal 19 (Krt19) from Mus musculus (Mouse).